The primary structure comprises 201 residues: Ribonuclease HII (201 aa).

An RNase H type-2 domain is found at 10–200; that stretch reads LIEAGCDEAG…LGDGQLELFS (191 aa). A divalent metal cation contacts are provided by Asp-16, Glu-17, and Asp-108.

It belongs to the RNase HII family. Mn(2+) serves as cofactor. The cofactor is Mg(2+).

It localises to the cytoplasm. It catalyses the reaction Endonucleolytic cleavage to 5'-phosphomonoester.. In terms of biological role, endonuclease that specifically degrades the RNA of RNA-DNA hybrids. The sequence is that of Ribonuclease HII from Bacteroides fragilis (strain YCH46).